Here is a 420-residue protein sequence, read N- to C-terminus: Heterogeneous nuclear ribonucleoprotein D-like (420 aa).

2 disordered regions span residues 1-83 (MEVP…RRRP) and 96-120 (QRSAAAAAATRTARQHPPADSSVTM). An Omega-N-methylarginine modification is found at Arg-25. Over residues 36–52 (RQLAPLLPSLAPSSARQ) the composition is skewed to low complexity. 2 consecutive RRM domains span residues 148–230 (GKMF…KGKE) and 233–312 (KKVF…QPKE). Lys-161 bears the N6-methyllysine mark. Residue Lys-209 forms a Glycyl lysine isopeptide (Lys-Gly) (interchain with G-Cter in SUMO2) linkage. Lys-216 carries the post-translational modification N6-acetyllysine. The residue at position 241 (Ser-241) is a Phosphoserine. Disordered stretches follow at residues 313 to 348 (VYRQQQQQQKGGRGAAAGGRGGTRGRGRGQGQNWNQ) and 398 to 420 (GQQSTYGKASRGGGNHQNNYQPY). The segment covering 323 to 342 (GGRGAAAGGRGGTRGRGRGQ) has biased composition (gly residues). The segment at 342-420 (QGQNWNQGFN…GNHQNNYQPY (79 aa)) is necessary for interaction with TNPO1. Residues 396 to 420 (YSGQQSTYGKASRGGGNHQNNYQPY) form a necessary for its nuclear import and export region. Arg-408 carries the dimethylated arginine; alternate modification. Arg-408 bears the Omega-N-methylarginine; alternate mark.

Interacts with ZNF148. Interacts with TNPO1. Dimethylation of Arg-408 is probably of the asymmetric type. In terms of tissue distribution, expressed in heart, brain, placenta, lung, liver, skeletal muscle, kidney, pancreas, spleen, thymus, prostate, testis, ovary, small intestine, colon and leukocytes. Expressed in myeloid leukemia, gastric adenocarcinoma, cervical carcinoma, hepatoma, fibrosarcoma, colon adenocarcinoma, epidermoid carcinoma, osteosarcoma and urinary bladder carcinoma cells.

The protein localises to the nucleus. The protein resides in the cytoplasm. Functionally, acts as a transcriptional regulator. Promotes transcription repression. Promotes transcription activation in differentiated myotubes. Binds to double- and single-stranded DNA sequences. Binds to the transcription suppressor CATR sequence of the COX5B promoter. Binds with high affinity to RNA molecules that contain AU-rich elements (AREs) found within the 3'-UTR of many proto-oncogenes and cytokine mRNAs. Binds both to nuclear and cytoplasmic poly(A) mRNAs. Binds to poly(G) and poly(A), but not to poly(U) or poly(C) RNA homopolymers. Binds to the 5'-ACUAGC-3' RNA consensus sequence. This chain is Heterogeneous nuclear ribonucleoprotein D-like (HNRNPDL), found in Homo sapiens (Human).